The sequence spans 150 residues: Nitric oxide reductase subunit C (150 aa).

Residues 13-29 form a helical; Signal-anchor membrane-spanning segment; that stretch reads VFYGGSIFFILIFGALT. Positions 62, 65, and 66 each coordinate heme c.

As to quaternary structure, heterodimer of cytochromes b (large subunit) and c (small subunit).

The protein localises to the cell membrane. In terms of biological role, component of the anaerobic respiratory chain that transforms nitrate to dinitrogen (denitrification). In Paracoccus denitrificans, this protein is Nitric oxide reductase subunit C (norC).